Consider the following 179-residue polypeptide: Large ribosomal subunit protein uL6 (179 aa).

The protein belongs to the universal ribosomal protein uL6 family. In terms of assembly, part of the 50S ribosomal subunit.

This protein binds to the 23S rRNA, and is important in its secondary structure. It is located near the subunit interface in the base of the L7/L12 stalk, and near the tRNA binding site of the peptidyltransferase center. In Nocardia farcinica (strain IFM 10152), this protein is Large ribosomal subunit protein uL6.